Here is a 185-residue protein sequence, read N- to C-terminus: Ribosome-recycling factor (185 aa).

The protein belongs to the RRF family.

Its subcellular location is the cytoplasm. Functionally, responsible for the release of ribosomes from messenger RNA at the termination of protein biosynthesis. May increase the efficiency of translation by recycling ribosomes from one round of translation to another. The polypeptide is Ribosome-recycling factor (Saccharophagus degradans (strain 2-40 / ATCC 43961 / DSM 17024)).